Consider the following 149-residue polypeptide: 3-dehydroquinate dehydratase (149 aa).

Catalysis depends on tyrosine 22, which acts as the Proton acceptor. Substrate contacts are provided by asparagine 73, histidine 79, and aspartate 86. The active-site Proton donor is histidine 99. Substrate-binding positions include 100-101 and arginine 110; that span reads LS.

Belongs to the type-II 3-dehydroquinase family. Homododecamer.

It catalyses the reaction 3-dehydroquinate = 3-dehydroshikimate + H2O. It functions in the pathway metabolic intermediate biosynthesis; chorismate biosynthesis; chorismate from D-erythrose 4-phosphate and phosphoenolpyruvate: step 3/7. Catalyzes a trans-dehydration via an enolate intermediate. This Prochlorococcus marinus (strain MIT 9313) protein is 3-dehydroquinate dehydratase.